The following is a 277-amino-acid chain: Phosphoribosylaminoimidazole-succinocarboxamide synthase (277 aa).

The protein belongs to the SAICAR synthetase family.

It carries out the reaction 5-amino-1-(5-phospho-D-ribosyl)imidazole-4-carboxylate + L-aspartate + ATP = (2S)-2-[5-amino-1-(5-phospho-beta-D-ribosyl)imidazole-4-carboxamido]succinate + ADP + phosphate + 2 H(+). Its pathway is purine metabolism; IMP biosynthesis via de novo pathway; 5-amino-1-(5-phospho-D-ribosyl)imidazole-4-carboxamide from 5-amino-1-(5-phospho-D-ribosyl)imidazole-4-carboxylate: step 1/2. The polypeptide is Phosphoribosylaminoimidazole-succinocarboxamide synthase (Salinispora tropica (strain ATCC BAA-916 / DSM 44818 / JCM 13857 / NBRC 105044 / CNB-440)).